The primary structure comprises 306 residues: D-alanine--D-alanine ligase (306 aa).

The ATP-grasp domain maps to 102 to 300; sequence KIVVASVGVS…YGDIVQWMVE (199 aa). Residue 128 to 183 coordinates ATP; the sequence is PMEPPYVIKPVCEGSSLGVIIVKENESVPSLNVVGSEWVYADTVIVEKYIPGRELT. Positions 253, 267, and 269 each coordinate Mg(2+).

Belongs to the D-alanine--D-alanine ligase family. Requires Mg(2+) as cofactor. The cofactor is Mn(2+).

Its subcellular location is the cytoplasm. The catalysed reaction is 2 D-alanine + ATP = D-alanyl-D-alanine + ADP + phosphate + H(+). It functions in the pathway cell wall biogenesis; peptidoglycan biosynthesis. Its function is as follows. Cell wall formation. The polypeptide is D-alanine--D-alanine ligase (Bartonella henselae (strain ATCC 49882 / DSM 28221 / CCUG 30454 / Houston 1) (Rochalimaea henselae)).